Here is a 414-residue protein sequence, read N- to C-terminus: CinA-like protein (414 aa).

Belongs to the CinA family.

This is CinA-like protein from Acidobacterium capsulatum (strain ATCC 51196 / DSM 11244 / BCRC 80197 / JCM 7670 / NBRC 15755 / NCIMB 13165 / 161).